A 384-amino-acid polypeptide reads, in one-letter code: DNA dC-&gt;dU-editing enzyme APOBEC-3G (384 aa).

Residues 1–60 are essential for cytoplasmic localization; the sequence is MNPQFRNMVDGMDPHKFSYNFKNRPILSRRNTVWLCYEVKTKGPSRPPLDAKIFRGQVYF. 2 consecutive CMP/dCMP-type deaminase domains span residues 29–138 and 214–328; these read RRNT…LRSL and GRHE…LRTL. Phosphothreonine; by PKA is present on Thr-32. 3 residues coordinate Zn(2+): His-65, Cys-97, and Cys-100. Positions 209-336 are necessary for homooligomerization; the sequence is EPCVEGRHET…TLDEAEAKIS (128 aa). Positions 213–215 are interaction with DNA; that stretch reads EGR. Thr-218 is subject to Phosphothreonine; by PKA and CAMK2. His-257 serves as a coordination point for Zn(2+). The active-site Proton donor is the Glu-259. Positions 288 and 291 each coordinate Zn(2+). The interaction with DNA stretch occupies residues 313 to 320; it reads RIYDDQGR.

Belongs to the cytidine and deoxycytidylate deaminase family. Homodimer. It depends on Zn(2+) as a cofactor.

It localises to the cytoplasm. The protein localises to the nucleus. Its subcellular location is the P-body. It catalyses the reaction a 2'-deoxycytidine in single-stranded DNA + H2O + H(+) = a 2'-deoxyuridine in single-stranded DNA + NH4(+). Its function is as follows. DNA deaminase (cytidine deaminase) which acts as an inhibitor of retrovirus replication and retrotransposon mobility. After the penetration of retroviral nucleocapsids into target cells of infection and the initiation of reverse transcription, it can induce the conversion of cytosine to uracil in the minus-sense single-strand viral DNA, leading to G-to-A hypermutations in the subsequent plus-strand viral DNA. The resultant detrimental levels of mutations in the proviral genome, along with a deamination-independent mechanism that works prior to the proviral integration, together exert efficient antiretroviral effects in infected target cells. Selectively targets single-stranded DNA and does not deaminate double-stranded DNA or single- or double-stranded RNA. The protein is DNA dC-&gt;dU-editing enzyme APOBEC-3G (APOBEC3G) of Pongo pygmaeus (Bornean orangutan).